The sequence spans 79 residues: MORN repeat-containing protein 2 (79 aa).

MORN repeat units follow at residues 15–36 (YEGQ…PNGA) and 38–55 (YTGN…EYTD).

The protein localises to the cytoplasmic vesicle. It localises to the secretory vesicle. The protein resides in the acrosome. It is found in the nucleus. In terms of biological role, might have a role in spermatogenesis. The chain is MORN repeat-containing protein 2 from Homo sapiens (Human).